The sequence spans 238 residues: Membrane protein 2 (238 aa).

Belongs to the varicellovirus ORF2 protein family. Post-translationally, phosphorylated by host.

It is found in the host membrane. The polypeptide is Membrane protein 2 (Varicella-zoster virus (strain Dumas) (HHV-3)).